Here is a 291-residue protein sequence, read N- to C-terminus: MFQKHLQKASDSVVGGTLYVVATPIGNLADITLRALAVLQKADIICAEDTRVTAQLLSAYGIQGKLVSVREHNERQMADKIVGYLSDGMVVAQVSDAGTPAVCDPGAKLARRVREAGFKVVPVVGASAVMAALSVAGVEGSDFYFNGFVPPKSGERRKLFAKWVRAAFPIVMFETPHRIGATLADMAELFPERRLMLAREITKTFETFLSGTVGEIQTALSADGNQSRGEMVLVLYPAQDEKHEGLSESAQNIMKILTAELPTKQAAELAAKITGEGKKALYDLALSWKNK.

Belongs to the methyltransferase superfamily. RsmI family.

It is found in the cytoplasm. It catalyses the reaction cytidine(1402) in 16S rRNA + S-adenosyl-L-methionine = 2'-O-methylcytidine(1402) in 16S rRNA + S-adenosyl-L-homocysteine + H(+). Functionally, catalyzes the 2'-O-methylation of the ribose of cytidine 1402 (C1402) in 16S rRNA. The protein is Ribosomal RNA small subunit methyltransferase I of Neisseria meningitidis serogroup B (strain ATCC BAA-335 / MC58).